We begin with the raw amino-acid sequence, 233 residues long: uncharacterized protein (233 aa).

7 residues coordinate Zn(2+): His64, His66, Asp68, His69, His143, Asp162, and His212.

It belongs to the metallo-beta-lactamase superfamily. Glyoxalase II family. It depends on Zn(2+) as a cofactor.

This is an uncharacterized protein from Bacillus subtilis (strain 168).